The chain runs to 880 residues: Leucine--tRNA ligase (880 aa).

Residues 46–56 (PYPSGALHMGH) carry the 'HIGH' region motif. The 'KMSKS' region motif lies at 638–642 (KMSKS). Lys641 serves as a coordination point for ATP.

It belongs to the class-I aminoacyl-tRNA synthetase family.

It localises to the cytoplasm. The enzyme catalyses tRNA(Leu) + L-leucine + ATP = L-leucyl-tRNA(Leu) + AMP + diphosphate. In Xanthomonas axonopodis pv. citri (strain 306), this protein is Leucine--tRNA ligase.